Reading from the N-terminus, the 175-residue chain is B9 domain-containing protein 2 (175 aa).

The C2 B9-type domain maps to 2 to 118 (AEVHVIGQII…ACPTWRPLGS (117 aa)).

This sequence belongs to the B9D family. As to quaternary structure, part of the tectonic-like complex (also named B9 complex). Interacts with TUBG1.

Its subcellular location is the cytoplasm. The protein localises to the cytoskeleton. It is found in the cilium basal body. The protein resides in the cilium axoneme. It localises to the nucleus. Functionally, component of the tectonic-like complex, a complex localized at the transition zone of primary cilia and acting as a barrier that prevents diffusion of transmembrane proteins between the cilia and plasma membranes. The chain is B9 domain-containing protein 2 (B9D2) from Homo sapiens (Human).